A 136-amino-acid polypeptide reads, in one-letter code: GLEDCDFGWSPYDQHCYQAFNEQKTWDEAEKFCRAQENGAHLASIESNGEADFVSWLISQKDELADEDYVWIGLRAQNKEQQCSSEWSDGSSVSYENLIDLHTKKCGALEKLTGFRKWVNYYCEQMHAFVCKLLPY.

3 disulfides stabilise this stretch: C5–C16, C33–C131, and C106–C123. Residues 12–132 form the C-type lectin domain; sequence YDQHCYQAFN…CEQMHAFVCK (121 aa).

Belongs to the snaclec family. Dimer (non-covalently linked) of heterodimers of subunits alpha and beta (disulfide-linked). In terms of tissue distribution, expressed by the venom gland.

It localises to the secreted. Functionally, elicits platelet aggregation by the binding to the C-type lectin domain family 1 member B (CLEC1B/CLEC2). Binding leads to tyrosine phosphorylation in the cytoplasmic tail of CLEC1B, which promotes the binding of spleen tyrosine kinase (Syk), subsequent activation of PLC-gamma-2, and platelet activation and aggregation. Binding to GPIbalpha (GP1BA) and alpha-2/beta-1 (ITGA2/ITGB1) may also induce aggregation, but this is controversial. This chain is Snaclec rhodocytin subunit alpha, found in Calloselasma rhodostoma (Malayan pit viper).